An 89-amino-acid chain; its full sequence is Small membrane A-kinase anchor protein (89 aa).

The segment at 1–29 (MGCMKSKRRDPTQNSDSSEKVDGKPGKHG) is disordered. A lipid anchor (N-myristoyl glycine) is attached at glycine 2. The segment covering 17–29 (SSEKVDGKPGKHG) has biased composition (basic and acidic residues).

This sequence belongs to the small membrane AKAP family. May be palmitoylated at Cys-3.

It is found in the cell membrane. In terms of biological role, binds to type I regulatory subunits of protein kinase A and may anchor/target them to the plasma membrane. The polypeptide is Small membrane A-kinase anchor protein (Danio rerio (Zebrafish)).